The chain runs to 225 residues: U2 small nuclear ribonucleoprotein B'' (225 aa).

One can recognise an RRM 1 domain in the interval 7–86 (HTIYINNMND…KPMRIQYAKT (80 aa)). Residues 100–144 (DKEKKKEKKKAKTMEQAAAAANKKPGQGTPNAANTQGTAAPNPQV) are disordered. An N6-acetyllysine; alternate modification is found at K111. A Glycyl lysine isopeptide (Lys-Gly) (interchain with G-Cter in SUMO2); alternate cross-link involves residue K111. Low complexity predominate over residues 113-123 (MEQAAAAANKK). Polar residues predominate over residues 127–140 (GTPNAANTQGTAAP). At Y151 the chain carries Phosphotyrosine. The 75-residue stretch at 151–225 (YILFLNNLPE…HAMKITYAKK (75 aa)) folds into the RRM 2 domain.

The protein belongs to the RRM U1 A/B'' family. In terms of assembly, identified in the spliceosome B complex. Identified in the spliceosome C complex. Present in a spliceosome complex assembled in vitro, and composed of SNRPB2, HPRP8BP and CRNKL1. Contributes to the binding of stem loop IV of U2 snRNA with SNRPP1.

It localises to the nucleus. Its function is as follows. Involved in pre-mRNA splicing as component of the spliceosome. Associated with sn-RNP U2, where it contributes to the binding of stem loop IV of U2 snRNA. The chain is U2 small nuclear ribonucleoprotein B'' (Snrpb2) from Mus musculus (Mouse).